The sequence spans 290 residues: Programmed cell death 1 ligand 1 (290 aa).

The signal sequence occupies residues 1 to 18; it reads MRIFAVFIFMTYWHLLNA. The 109-residue stretch at 19-127 folds into the Ig-like V-type domain; the sequence is FTVTVPKDLY…YGGADYKRIT (109 aa). Residues 19 to 238 lie on the Extracellular side of the membrane; that stretch reads FTVTVPKDLY…LPLAHPPNER (220 aa). An N-linked (GlcNAc...) asparagine glycan is attached at Asn-35. 2 disulfide bridges follow: Cys-40-Cys-114 and Cys-155-Cys-209. Residues 133–225 form the Ig-like C2-type domain; the sequence is PYNKINQRIL…PEENHTAELV (93 aa). N-linked (GlcNAc...) asparagine glycans are attached at residues Asn-192, Asn-200, and Asn-219. The chain crosses the membrane as a helical span at residues 239 to 259; sequence THLVILGAILLCLGVALTFIF. Topologically, residues 260 to 290 are cytoplasmic; sequence RLRKGRMMDVKKCGIQDTNSKKQSDTHLEET.

Belongs to the immunoglobulin superfamily. BTN/MOG family. As to quaternary structure, interacts with PDCD1. Interacts (via transmembrane domain) with CMTM4 and CMTM6. Interacts with (phosphorylated) STAT3; promoting nuclear translocation. Interacts with CD80. May form homomultimers. Post-translationally, ubiquitinated; STUB1 likely mediates polyubiquitination of PD-L1/CD274 triggering its degradation. Ubiquitinated by MARCHF8; leading to degradation. Deubiquitinated by USP22; leading to stabilization. Highly expressed in the heart, skeletal muscle, placenta and lung. Weakly expressed in the thymus, spleen, kidney and liver. Expressed on activated T- and B-cells, dendritic cells, keratinocytes and monocytes. As to expression, widely expressed, highest in lung, liver and pituitary and in various peripheral blood cells, including neutrophils and some subtypes of lymphoid and myeloid cells.

It is found in the cell membrane. The protein localises to the early endosome membrane. It localises to the recycling endosome membrane. Its subcellular location is the nucleus. The protein resides in the endomembrane system. It is found in the secreted. Plays a critical role in induction and maintenance of immune tolerance to self. As a ligand for the inhibitory receptor PDCD1/PD-1, modulates the activation threshold of T-cells and limits T-cell effector response. Through a yet unknown activating receptor, may costimulate T-cell subsets that predominantly produce interleukin-10 (IL10). Can also act as a transcription coactivator: in response to hypoxia, translocates into the nucleus via its interaction with phosphorylated STAT3 and promotes transcription of GSDMC, leading to pyroptosis. Functionally, the PDCD1-mediated inhibitory pathway is exploited by tumors to attenuate anti-tumor immunity and escape destruction by the immune system, thereby facilitating tumor survival. The interaction with PDCD1/PD-1 inhibits cytotoxic T lymphocytes (CTLs) effector function. The blockage of the PDCD1-mediated pathway results in the reversal of the exhausted T-cell phenotype and the normalization of the anti-tumor response, providing a rationale for cancer immunotherapy. The protein is Programmed cell death 1 ligand 1 of Homo sapiens (Human).